Consider the following 178-residue polypeptide: Transcription factor E (178 aa).

In terms of domain architecture, HTH TFE/IIEalpha-type spans 3–86 (AHEALAEIAG…YWRITDEPIQ (84 aa)).

It belongs to the TFE family. In terms of assembly, monomer. Interaction with RNA polymerase subunits RpoF and RpoE is necessary for Tfe stimulatory transcription activity. Able to interact with Tbp and RNA polymerase in the absence of DNA promoter. Interacts both with the preinitiation and elongation complexes.

Functionally, transcription factor that plays a role in the activation of archaeal genes transcribed by RNA polymerase. Facilitates transcription initiation by enhancing TATA-box recognition by TATA-box-binding protein (Tbp), and transcription factor B (Tfb) and RNA polymerase recruitment. Not absolutely required for transcription in vitro, but particularly important in cases where Tbp or Tfb function is not optimal. It dynamically alters the nucleic acid-binding properties of RNA polymerases by stabilizing the initiation complex and destabilizing elongation complexes. Seems to translocate with the RNA polymerase following initiation and acts by binding to the non template strand of the transcription bubble in elongation complexes. The polypeptide is Transcription factor E (Thermofilum pendens (strain DSM 2475 / Hrk 5)).